A 448-amino-acid polypeptide reads, in one-letter code: Exodeoxyribonuclease 7 large subunit (448 aa).

The protein belongs to the XseA family. Heterooligomer composed of large and small subunits.

The protein localises to the cytoplasm. The catalysed reaction is Exonucleolytic cleavage in either 5'- to 3'- or 3'- to 5'-direction to yield nucleoside 5'-phosphates.. Functionally, bidirectionally degrades single-stranded DNA into large acid-insoluble oligonucleotides, which are then degraded further into small acid-soluble oligonucleotides. In Tolumonas auensis (strain DSM 9187 / NBRC 110442 / TA 4), this protein is Exodeoxyribonuclease 7 large subunit.